The primary structure comprises 144 residues: Nucleoside diphosphate kinase (144 aa).

Residues Lys-5, Phe-53, Arg-81, Thr-87, Arg-98, and Asn-108 each contribute to the ATP site. His-111 functions as the Pros-phosphohistidine intermediate in the catalytic mechanism.

This sequence belongs to the NDK family. Mg(2+) serves as cofactor.

The catalysed reaction is a 2'-deoxyribonucleoside 5'-diphosphate + ATP = a 2'-deoxyribonucleoside 5'-triphosphate + ADP. The enzyme catalyses a ribonucleoside 5'-diphosphate + ATP = a ribonucleoside 5'-triphosphate + ADP. In terms of biological role, major role in the synthesis of nucleoside triphosphates other than ATP. The ATP gamma phosphate is transferred to the NDP beta phosphate via a ping-pong mechanism, using a phosphorylated active-site intermediate. This chain is Nucleoside diphosphate kinase, found in Solanum lycopersicum (Tomato).